A 511-amino-acid chain; its full sequence is GMP synthase [glutamine-hydrolyzing] (511 aa).

One can recognise a Glutamine amidotransferase type-1 domain in the interval 6 to 196 (LVLVLDFGSQ…VFDVCGCTGD (191 aa)). Cys-83 functions as the Nucleophile in the catalytic mechanism. Catalysis depends on residues His-170 and Glu-172. Positions 197–386 (WSIENFIDME…LGVPDRIVWR (190 aa)) constitute a GMPS ATP-PPase domain. 224–230 (SGGVDSS) is an ATP binding site.

As to quaternary structure, homodimer.

The enzyme catalyses XMP + L-glutamine + ATP + H2O = GMP + L-glutamate + AMP + diphosphate + 2 H(+). It functions in the pathway purine metabolism; GMP biosynthesis; GMP from XMP (L-Gln route): step 1/1. Its function is as follows. Catalyzes the synthesis of GMP from XMP. In Oceanobacillus iheyensis (strain DSM 14371 / CIP 107618 / JCM 11309 / KCTC 3954 / HTE831), this protein is GMP synthase [glutamine-hydrolyzing].